A 254-amino-acid polypeptide reads, in one-letter code: 5-keto-D-gluconate 5-reductase (254 aa).

13 to 37 (LITGSAQGIGFLLATGLGKYGAQII) serves as a coordination point for NADP(+). A substrate-binding site is contributed by Ser145. Tyr158 serves as the catalytic Proton acceptor.

The protein belongs to the short-chain dehydrogenases/reductases (SDR) family.

It catalyses the reaction D-gluconate + NAD(+) = 5-dehydro-D-gluconate + NADH + H(+). The enzyme catalyses D-gluconate + NADP(+) = 5-dehydro-D-gluconate + NADPH + H(+). The protein operates within carbohydrate acid metabolism; L-idonate degradation. Catalyzes the reduction of 5-keto-D-gluconate to D-gluconate, using either NADH or NADPH. Is likely involved in an L-idonate degradation pathway that allows E.coli to utilize L-idonate as the sole carbon and energy source. Is also able to catalyze the reverse reaction in vitro, but the D-gluconate oxidation by the enzyme can only proceed with NAD. The sequence is that of 5-keto-D-gluconate 5-reductase from Escherichia coli O6:H1 (strain CFT073 / ATCC 700928 / UPEC).